Consider the following 393-residue polypeptide: Cyclin CCL1 (393 aa).

A compositionally biased stretch (polar residues) spans 1-19 (MTDIQLNGKSTLDTPSATM). Disordered stretches follow at residues 1-45 (MTDI…RISD) and 289-325 (SREGSQESVPGNEKEEPQNDASTTEKNKEKSTESEEY). Composition is skewed to basic and acidic residues over residues 21-35 (AKEKEAKLKSADENN) and 300-321 (NEKEEPQNDASTTEKNKEKSTE).

This sequence belongs to the cyclin family. Cyclin C subfamily. CCL1 and KIN28 form the TFIIK complex, a component of TFIIH holo complex. Component of a complex consisting of KIN28, CCL1 and TFB3.

Its function is as follows. Regulatory component of the TFIIK complex (KIN28-CCL1 dimer) which is the protein kinase component of transcription factor IIH (TFIIH) and phosphorylates the C-terminal domain of RNA polymerase II during transition from transcription to elongation after preinitiation complex (PIC) formation, thereby positively regulating transcription. TFIIH (or factor B) is essential for both basal and activated transcription, and is involved in nucleotide excision repair (NER) of damaged DNA. TFIIH has DNA-dependent ATPase activity and is essential for polymerase II transcription in vitro. The polypeptide is Cyclin CCL1 (CCL1) (Saccharomyces cerevisiae (strain ATCC 204508 / S288c) (Baker's yeast)).